We begin with the raw amino-acid sequence, 548 residues long: Glucose-6-phosphate isomerase (548 aa).

Catalysis depends on glutamate 355, which acts as the Proton donor. Catalysis depends on residues histidine 386 and lysine 514.

It belongs to the GPI family.

Its subcellular location is the cytoplasm. The enzyme catalyses alpha-D-glucose 6-phosphate = beta-D-fructose 6-phosphate. Its pathway is carbohydrate biosynthesis; gluconeogenesis. It functions in the pathway carbohydrate degradation; glycolysis; D-glyceraldehyde 3-phosphate and glycerone phosphate from D-glucose: step 2/4. Catalyzes the reversible isomerization of glucose-6-phosphate to fructose-6-phosphate. The sequence is that of Glucose-6-phosphate isomerase from Yersinia enterocolitica serotype O:8 / biotype 1B (strain NCTC 13174 / 8081).